The primary structure comprises 369 residues: Integrator complex assembly factor WDR73 (369 aa).

WD repeat units lie at residues F74 to I114, A266 to K306, and G326 to G366.

This sequence belongs to the WD repeat WDR73 family.

Its subcellular location is the cytoplasm. The protein resides in the cytoskeleton. It is found in the spindle. The protein localises to the spindle pole. It localises to the cleavage furrow. Its function is as follows. Component of a multiprotein complex required for the assembly of the RNA endonuclease module of the integrator complex. Associates with ints9 and ints11 in the cytoplasm, stabilizing the ints9-ints11 heterodimer and blocking the active site of ints11. Brat1 then joins the complex and plugs the active site of ints11, leading to wdr73 release and nuclear import of ints9 and ints11. This is Integrator complex assembly factor WDR73 (wdr73) from Xenopus laevis (African clawed frog).